We begin with the raw amino-acid sequence, 234 residues long: Endonuclease V (234 aa).

Mg(2+) is bound by residues D46 and D116.

Belongs to the endonuclease V family. Mg(2+) serves as cofactor.

It is found in the cytoplasm. It catalyses the reaction Endonucleolytic cleavage at apurinic or apyrimidinic sites to products with a 5'-phosphate.. In terms of biological role, DNA repair enzyme involved in the repair of deaminated bases. Selectively cleaves double-stranded DNA at the second phosphodiester bond 3' to a deoxyinosine leaving behind the intact lesion on the nicked DNA. The polypeptide is Endonuclease V (Clostridium acetobutylicum (strain ATCC 824 / DSM 792 / JCM 1419 / IAM 19013 / LMG 5710 / NBRC 13948 / NRRL B-527 / VKM B-1787 / 2291 / W)).